The sequence spans 121 residues: Large ribosomal subunit protein bL12 (121 aa).

The protein belongs to the bacterial ribosomal protein bL12 family. In terms of assembly, homodimer. Part of the ribosomal stalk of the 50S ribosomal subunit. Forms a multimeric L10(L12)X complex, where L10 forms an elongated spine to which 2 to 4 L12 dimers bind in a sequential fashion. Binds GTP-bound translation factors.

Its function is as follows. Forms part of the ribosomal stalk which helps the ribosome interact with GTP-bound translation factors. Is thus essential for accurate translation. This is Large ribosomal subunit protein bL12 from Xanthomonas euvesicatoria pv. vesicatoria (strain 85-10) (Xanthomonas campestris pv. vesicatoria).